A 429-amino-acid chain; its full sequence is Adenylosuccinate synthetase (429 aa).

GTP-binding positions include 12–18 and 40–42; these read GDEGKGK and GHT. Asp-13 functions as the Proton acceptor in the catalytic mechanism. The Mg(2+) site is built by Asp-13 and Gly-40. IMP is bound by residues 13–16, 38–41, Thr-128, Arg-142, Gln-223, Thr-238, and Arg-302; these read DEGK and NAGH. His-41 (proton donor) is an active-site residue. Substrate is bound at residue 298 to 304; sequence TTTGRAR. Residues Arg-304, 330-332, and 412-414 each bind GTP; these read SID and SVG.

The protein belongs to the adenylosuccinate synthetase family. In terms of assembly, homodimer. It depends on Mg(2+) as a cofactor.

The protein localises to the cytoplasm. It catalyses the reaction IMP + L-aspartate + GTP = N(6)-(1,2-dicarboxyethyl)-AMP + GDP + phosphate + 2 H(+). It participates in purine metabolism; AMP biosynthesis via de novo pathway; AMP from IMP: step 1/2. In terms of biological role, plays an important role in the de novo pathway of purine nucleotide biosynthesis. Catalyzes the first committed step in the biosynthesis of AMP from IMP. This chain is Adenylosuccinate synthetase, found in Oceanobacillus iheyensis (strain DSM 14371 / CIP 107618 / JCM 11309 / KCTC 3954 / HTE831).